The following is a 144-amino-acid chain: L-fucose mutarotase (144 aa).

H22 (proton donor) is an active-site residue. Residues D30, R109, and 131–133 (YGN) contribute to the substrate site.

The protein belongs to the RbsD / FucU family. FucU mutarotase subfamily. As to quaternary structure, homodecamer.

It is found in the cytoplasm. The enzyme catalyses alpha-L-fucose = beta-L-fucose. Its pathway is carbohydrate metabolism; L-fucose metabolism. Involved in the anomeric conversion of L-fucose. The chain is L-fucose mutarotase from Haemophilus influenzae (strain PittEE).